Reading from the N-terminus, the 236-residue chain is Adenylate dimethylallyltransferase (236 aa).

This sequence belongs to the isopentenyl transferase family.

The enzyme catalyses dimethylallyl diphosphate + AMP = N(6)-(dimethylallyl)adenosine 5'-phosphate + diphosphate. Transfers dimethylallyl groups to AMP as part of the biosynthesis of cytokinin phytohormones. The chain is Adenylate dimethylallyltransferase (ipt) from Pantoea agglomerans pv. gypsophilae (Erwinia herbicola).